Consider the following 1264-residue polypeptide: Regulator of G-protein signaling 22 (1264 aa).

Residues 565–587 (EEFSLSQPPKSPNKSPEVKTATQ) are disordered. Polar residues predominate over residues 568 to 578 (SLSQPPKSPNK). 2 RGS domains span residues 852 to 980 (KFSD…AARQ) and 1021 to 1145 (AFRK…TDEN). Positions 1142–1174 (TDENIMSVLERRQEYNKQKKKLAVLEDEKSGKD) form a coiled coil.

Interacts with GNA11, GNA12 and GNA13. In terms of tissue distribution, testis-specific. Expressed in Leydig cells and spermatogenic cells from the spermatogonia to spermatid stages (at protein level).

The protein resides in the cytoplasm. It localises to the nucleus. Functionally, inhibits signal transduction by increasing the GTPase activity of G protein alpha subunits thereby driving them into their inactive GDP-bound form. The protein is Regulator of G-protein signaling 22 (RGS22) of Homo sapiens (Human).